A 306-amino-acid chain; its full sequence is Follistatin-related protein 1 (306 aa).

A signal peptide spans 1–18 (MWKRWLALSLVTIALVHG). Residues 28–51 (ICANVFCGAGRECAVTEKGEPTCL) enclose the Follistatin-like domain. Disulfide bonds link Cys29/Cys40, Cys34/Cys50, Cys52/Cys82, Cys56/Cys75, and Cys64/Cys96. Positions 46 to 98 (GEPTCLCIEQCKPHKRPVCGSNGKTYLNHCELHRDACLTGSKIQVDYDGHCKE) constitute a Kazal-like domain. Asn142 carries N-linked (GlcNAc...) asparagine glycosylation. The region spanning 142–176 (NYSEILDKYFKSFDNGDSHLDSSEFLKFVEQNETA) is the EF-hand 1 domain. Residue Ser163 is modified to Phosphoserine. 2 N-linked (GlcNAc...) asparagine glycosylation sites follow: Asn173 and Asn178. The 36-residue stretch at 191-226 (LRSLCVDALIELSDENADWKLSFQEFLKCLNPSFNP) folds into the EF-hand 2 domain. In terms of domain architecture, VWFC spans 231–285 (CALEDETYADGAETEVDCNRCVCSCGHWVCTAMTCDGKNQKGVQTHTEEEKTGYV).

As to quaternary structure, homodimer. Interacts with SCN10A. Interacts with DIP2A; DIP2A may act as a cell surface receptor for FSTL1. Interacts with BMP4. Interacts with CD14; this interaction promotes TL4-mediated signaling cascade. In terms of tissue distribution, during central nervous system development, strongly expressed in the telencephalon, diencephalon, brainstem, limbic system and spinal cord. Widely expressed in all organs.

The protein resides in the secreted. Functionally, secreted glycoprotein that is involved in various physiological processes, such as angiogenesis, regulation of the immune response, cell proliferation and differentiation. Plays a role in the development of the central nervous system, skeletal system, lungs, and ureter. Promotes endothelial cell survival, migration and differentiation into network structures in an AKT-dependent manner. Also promotes survival of cardiac myocytes. Initiates various signaling cascades by activating different receptors on the cell surface such as DIP2A, TLR4 or BMP receptors. This is Follistatin-related protein 1 (Fstl1) from Mus musculus (Mouse).